A 222-amino-acid chain; its full sequence is Charged multivesicular body protein 3 (222 aa).

Gly2 is lipidated: N-myristoyl glycine. The interval 2–113 (GLFGKTQEKP…LQKSTEVMKA (112 aa)) is intramolecular interaction with C-terminus. The stretch at 22–54 (KIRKEMRVVDRQIRDIQREEEKVKRSVKDAAKK) forms a coiled coil. 2 important for autoinhibitory function regions span residues 59-64 (VCIVLA) and 168-169 (IL). Residues 141 to 222 (EEMLEDTFES…MQSRLATLRS (82 aa)) are a coiled coil. The segment at 151–220 (MDDQEEMEEE…EAMQSRLATL (70 aa)) is intramolecular interaction with N-terminus. Residues 151–222 (MDDQEEMEEE…MQSRLATLRS (72 aa)) form an interaction with VPS4A region. A Glycyl lysine isopeptide (Lys-Gly) (interchain with G-Cter in ubiquitin) cross-link involves residue Lys179. The interval 180–222 (APSKVTDALPEPEPPGAMAASEDEEEEEEALEAMQSRLATLRS) is disordered. Position 200 is a phosphoserine (Ser200). A compositionally biased stretch (acidic residues) spans 200–210 (SEDEEEEEEAL). The short motif at 201–211 (EDEEEEEEALE) is the MIT-interacting motif element. Interaction with STAMBP regions lie at residues 203–207 (EEEEE) and 221–222 (RS).

It belongs to the SNF7 family. Probable core component of the endosomal sorting required for transport complex III (ESCRT-III). ESCRT-III components are thought to multimerize to form a flat lattice on the perimeter membrane of the endosome. Several assembly forms of ESCRT-III may exist that interact and act sequentially. Forms a metastable monomer in solution; its core structure (without part of the putative autoinhibitory C-terminal acidic region) oligomerizes into a flat lattice via two different dimerization interfaces. In vitro, heteromerizes with CHMP2A (but not CHMP4) to form helical tubular structures that expose membrane-interacting sites on the outside whereas VPS4B can associate on the inside of the tubule. May interact with IGFBP7; the relevance of such interaction however remains unclear. Interacts with CHMP2A. Interacts with CHMP4A; the interaction requires the release of CHMP4A autoinhibition. Interacts with VPS4A. Interacts with STAMBP; the interaction appears to relieve the autoinhibition of CHMP3. Interacts with VTA1. Widely expressed. Expressed in heart, brain, placenta, lung, liver, skeletal muscle, kidney and pancreas.

The protein localises to the cytoplasm. Its subcellular location is the cytosol. The protein resides in the membrane. It is found in the endosome. It localises to the late endosome membrane. Its function is as follows. Probable core component of the endosomal sorting required for transport complex III (ESCRT-III) which is involved in multivesicular bodies (MVBs) formation and sorting of endosomal cargo proteins into MVBs. MVBs contain intraluminal vesicles (ILVs) that are generated by invagination and scission from the limiting membrane of the endosome and mostly are delivered to lysosomes enabling degradation of membrane proteins, such as stimulated growth factor receptors, lysosomal enzymes and lipids. The MVB pathway appears to require the sequential function of ESCRT-O, -I,-II and -III complexes. ESCRT-III proteins mostly dissociate from the invaginating membrane before the ILV is released. The ESCRT machinery also functions in topologically equivalent membrane fission events, such as the terminal stages of cytokinesis and the budding of enveloped viruses (HIV-1 and other lentiviruses). ESCRT-III proteins are believed to mediate the necessary vesicle extrusion and/or membrane fission activities, possibly in conjunction with the AAA ATPase VPS4. Selectively binds to phosphatidylinositol 3,5-bisphosphate PtdIns(3,5)P2 and PtdIns(3,4)P2 in preference to other phosphoinositides tested. Involved in late stages of cytokinesis. Plays a role in endosomal sorting/trafficking of EGF receptor. Isoform 2 prevents stress-mediated cell death and accumulation of reactive oxygen species when expressed in yeast cells. This Homo sapiens (Human) protein is Charged multivesicular body protein 3 (CHMP3).